A 289-amino-acid chain; its full sequence is Probable phosphoribulokinase (289 aa).

12–20 is an ATP binding site; sequence GSSGAGTTT.

This sequence belongs to the phosphoribulokinase family.

The enzyme catalyses D-ribulose 5-phosphate + ATP = D-ribulose 1,5-bisphosphate + ADP + H(+). This Escherichia coli (strain K12) protein is Probable phosphoribulokinase (prkB).